Reading from the N-terminus, the 253-residue chain is Sulfate transporter CysZ (253 aa).

The next 4 membrane-spanning stretches (helical) occupy residues 27–47 (FVLL…YLAV), 71–91 (ILWP…FTVV), 150–170 (LFIL…WLLF), and 211–231 (IVYV…AAVA).

The protein belongs to the CysZ family.

It localises to the cell inner membrane. Functionally, high affinity, high specificity proton-dependent sulfate transporter, which mediates sulfate uptake. Provides the sulfur source for the cysteine synthesis pathway. The chain is Sulfate transporter CysZ from Pseudomonas syringae pv. tomato (strain ATCC BAA-871 / DC3000).